The primary structure comprises 131 residues: Small ribosomal subunit protein uS8 (131 aa).

It belongs to the universal ribosomal protein uS8 family. As to quaternary structure, part of the 30S ribosomal subunit. Contacts proteins S5 and S12.

In terms of biological role, one of the primary rRNA binding proteins, it binds directly to 16S rRNA central domain where it helps coordinate assembly of the platform of the 30S subunit. In Zymomonas mobilis subsp. mobilis (strain ATCC 31821 / ZM4 / CP4), this protein is Small ribosomal subunit protein uS8.